Reading from the N-terminus, the 192-residue chain is Molybdenum cofactor guanylyltransferase (192 aa).

GTP-binding positions include 10-12, K23, N51, D69, and D99; that span reads LAG. D99 lines the Mg(2+) pocket.

Belongs to the MobA family. As to quaternary structure, monomer. Mg(2+) is required as a cofactor.

It is found in the cytoplasm. The enzyme catalyses Mo-molybdopterin + GTP + H(+) = Mo-molybdopterin guanine dinucleotide + diphosphate. Its function is as follows. Transfers a GMP moiety from GTP to Mo-molybdopterin (Mo-MPT) cofactor (Moco or molybdenum cofactor) to form Mo-molybdopterin guanine dinucleotide (Mo-MGD) cofactor. In Haemophilus influenzae (strain ATCC 51907 / DSM 11121 / KW20 / Rd), this protein is Molybdenum cofactor guanylyltransferase.